The sequence spans 152 residues: Ribosome maturation factor RimP (152 aa).

It belongs to the RimP family.

Its subcellular location is the cytoplasm. Required for maturation of 30S ribosomal subunits. This chain is Ribosome maturation factor RimP, found in Aeromonas hydrophila subsp. hydrophila (strain ATCC 7966 / DSM 30187 / BCRC 13018 / CCUG 14551 / JCM 1027 / KCTC 2358 / NCIMB 9240 / NCTC 8049).